A 79-amino-acid chain; its full sequence is RNA-binding protein Hfq (79 aa).

Residues 10-69 (DPFLNALRKEHVPVSIYLVNGIKLQGNIESFDQYVVLLRNTVTQMVYKHAISTVVPARPV) form the Sm domain.

This sequence belongs to the Hfq family. In terms of assembly, homohexamer.

In terms of biological role, RNA chaperone that binds small regulatory RNA (sRNAs) and mRNAs to facilitate mRNA translational regulation in response to envelope stress, environmental stress and changes in metabolite concentrations. Also binds with high specificity to tRNAs. This chain is RNA-binding protein Hfq, found in Burkholderia cenocepacia (strain HI2424).